The following is a 144-amino-acid chain: 3-hydroxyacyl-[acyl-carrier-protein] dehydratase FabZ (144 aa).

His-51 is an active-site residue.

Belongs to the thioester dehydratase family. FabZ subfamily.

Its subcellular location is the cytoplasm. The enzyme catalyses a (3R)-hydroxyacyl-[ACP] = a (2E)-enoyl-[ACP] + H2O. Involved in unsaturated fatty acids biosynthesis. Catalyzes the dehydration of short chain beta-hydroxyacyl-ACPs and long chain saturated and unsaturated beta-hydroxyacyl-ACPs. The sequence is that of 3-hydroxyacyl-[acyl-carrier-protein] dehydratase FabZ from Clostridium botulinum (strain Langeland / NCTC 10281 / Type F).